The sequence spans 541 residues: Glucose-6-phosphate isomerase (541 aa).

The active-site Proton donor is Glu346. Catalysis depends on residues His377 and Lys506.

The protein belongs to the GPI family.

It is found in the cytoplasm. It carries out the reaction alpha-D-glucose 6-phosphate = beta-D-fructose 6-phosphate. Its pathway is carbohydrate biosynthesis; gluconeogenesis. The protein operates within carbohydrate degradation; glycolysis; D-glyceraldehyde 3-phosphate and glycerone phosphate from D-glucose: step 2/4. Catalyzes the reversible isomerization of glucose-6-phosphate to fructose-6-phosphate. This chain is Glucose-6-phosphate isomerase, found in Rhizobium etli (strain ATCC 51251 / DSM 11541 / JCM 21823 / NBRC 15573 / CFN 42).